The chain runs to 1171 residues: DNA-directed RNA polymerase subunit beta (1171 aa).

The protein belongs to the RNA polymerase beta chain family. In terms of assembly, the RNAP catalytic core consists of 2 alpha, 1 beta, 1 beta' and 1 omega subunit. When a sigma factor is associated with the core the holoenzyme is formed, which can initiate transcription.

The enzyme catalyses RNA(n) + a ribonucleoside 5'-triphosphate = RNA(n+1) + diphosphate. Functionally, DNA-dependent RNA polymerase catalyzes the transcription of DNA into RNA using the four ribonucleoside triphosphates as substrates. This chain is DNA-directed RNA polymerase subunit beta, found in Arthrobacter sp. (strain FB24).